Reading from the N-terminus, the 386-residue chain is uncharacterized protein (386 aa).

The next 11 membrane-spanning stretches (helical) occupy residues 3–23 (WFSL…LVAI), 42–62 (LVGH…IFLW), 72–92 (FASF…SLFG), 102–122 (VPTI…LGVF), 145–165 (ILST…IAYF), 183–203 (FGGH…WLLL), 212–232 (WFLN…QIFL), 244–264 (TWGY…ITLV), 276–296 (ILVL…MIVG), 308–328 (VIAS…QELG), and 333–353 (LGKF…FLSS).

The protein to R.prowazekii RP382.

The protein resides in the cell membrane. This is an uncharacterized protein from Aquifex aeolicus (strain VF5).